Consider the following 145-residue polypeptide: uncharacterized protein (145 aa).

Methionine 1 carries the N-acetylmethionine modification. The disordered stretch occupies residues 15-41 (QLKNNSGGTNGDRNSGANNGGGENSAP). Residues 16-27 (LKNNSGGTNGDR) show a composition bias toward polar residues. 2 positions are modified to phosphoserine: serine 121 and serine 126. The segment at 125-145 (NSFDKQNAKNDDDEDDDDFFD) is disordered. Residues 135 to 145 (DDDEDDDDFFD) are compositionally biased toward acidic residues.

Belongs to the PDCD5 family.

This is an uncharacterized protein from Saccharomyces cerevisiae (strain ATCC 204508 / S288c) (Baker's yeast).